Here is a 176-residue protein sequence, read N- to C-terminus: Isopentenyl-diphosphate Delta-isomerase (176 aa).

Positions 22 and 28 each coordinate Mn(2+). The Nudix hydrolase domain occupies 26 to 160 (LRHKAVSVFV…PDRYTPWLRI (135 aa)). Residue C62 is part of the active site. H64 provides a ligand contact to Mn(2+). A Mg(2+)-binding site is contributed by E82. 2 residues coordinate Mn(2+): E108 and E110. Residue E110 is part of the active site.

This sequence belongs to the IPP isomerase type 1 family. Mg(2+) serves as cofactor. Mn(2+) is required as a cofactor.

The protein localises to the cytoplasm. The enzyme catalyses isopentenyl diphosphate = dimethylallyl diphosphate. It participates in isoprenoid biosynthesis; dimethylallyl diphosphate biosynthesis; dimethylallyl diphosphate from isopentenyl diphosphate: step 1/1. Its pathway is porphyrin-containing compound metabolism; chlorophyll biosynthesis. Catalyzes the 1,3-allylic rearrangement of the homoallylic substrate isopentenyl (IPP) to its highly electrophilic allylic isomer, dimethylallyl diphosphate (DMAPP). This chain is Isopentenyl-diphosphate Delta-isomerase, found in Roseobacter denitrificans (strain ATCC 33942 / OCh 114) (Erythrobacter sp. (strain OCh 114)).